Consider the following 64-residue polypeptide: Large ribosomal subunit protein bL35 (64 aa).

Positions 1–29 (MPKMKTHSGAKKRFKLTGSGKLRRQQANR) are disordered.

This sequence belongs to the bacterial ribosomal protein bL35 family.

This is Large ribosomal subunit protein bL35 from Pseudarthrobacter chlorophenolicus (strain ATCC 700700 / DSM 12829 / CIP 107037 / JCM 12360 / KCTC 9906 / NCIMB 13794 / A6) (Arthrobacter chlorophenolicus).